The chain runs to 175 residues: uncharacterized protein (175 aa).

The transit peptide at 1–11 directs the protein to the mitochondrion; the sequence is METWRKGSFRN. The interval 24 to 92 is disordered; that stretch reads RRLRRQSSVL…PRLYRESSSC (69 aa). Basic and acidic residues predominate over residues 41–63; that stretch reads GDHEEYSNREVIRELQGRPDGRR.

It localises to the mitochondrion. This is an uncharacterized protein from Homo sapiens (Human).